The primary structure comprises 454 residues: Zeatin O-xylosyltransferase (454 aa).

This sequence belongs to the UDP-glycosyltransferase family. High level in young seeds, less in older seeds and very low in roots.

It catalyses the reaction zeatin + UDP-alpha-D-xylose = O-beta-D-xylosylzeatin + UDP + H(+). Functionally, utilizes UDP-xylose as the sugar donor and catalyzes the formation of o-xylosylzeatin from zeatin. Does not act on UDP-glucose. The chain is Zeatin O-xylosyltransferase from Phaseolus vulgaris (Kidney bean).